A 312-amino-acid polypeptide reads, in one-letter code: MAEITASLVKELREKTGAGMMDCKKALGETAGDVEAAIDWLRKKGLAAAAKKAGRVAAEGLVGIAAAGTKGVAVEVNAETDFVARNDQFQGFVASVAAVALDKGADVEAIKAAACPGTDKNVADQLTHLIATIGENMSLRRAVRLEVSAGVVASYVHTAIAPGLGKIGCLVALESTGNVDRLNEVGKQIAMHVAAANPLFLDPSVVDTSALDRERNVLTEQAQASGKPAAVIEKMVEGRIRKYYEEVCLSEQVFVIDQENKISKVLENLGKEIGAPVKLAGFARFALGEGIEKEVSDFAAEVAAQAGTRPAG.

The interval Thr-80–Val-83 is involved in Mg(2+) ion dislocation from EF-Tu.

Belongs to the EF-Ts family.

The protein resides in the cytoplasm. Its function is as follows. Associates with the EF-Tu.GDP complex and induces the exchange of GDP to GTP. It remains bound to the aminoacyl-tRNA.EF-Tu.GTP complex up to the GTP hydrolysis stage on the ribosome. This Paramagnetospirillum magneticum (strain ATCC 700264 / AMB-1) (Magnetospirillum magneticum) protein is Elongation factor Ts.